Here is a 38-residue protein sequence, read N- to C-terminus: Photosystem II reaction center protein L (38 aa).

Residues 17-37 (SLYWGLLLIFVLAVLFSSYFF) form a helical membrane-spanning segment.

The protein belongs to the PsbL family. As to quaternary structure, PSII is composed of 1 copy each of membrane proteins PsbA, PsbB, PsbC, PsbD, PsbE, PsbF, PsbH, PsbI, PsbJ, PsbK, PsbL, PsbM, PsbT, PsbX, PsbY, PsbZ, Psb30/Ycf12, at least 3 peripheral proteins of the oxygen-evolving complex and a large number of cofactors. It forms dimeric complexes.

Its subcellular location is the plastid. The protein resides in the chloroplast thylakoid membrane. Functionally, one of the components of the core complex of photosystem II (PSII). PSII is a light-driven water:plastoquinone oxidoreductase that uses light energy to abstract electrons from H(2)O, generating O(2) and a proton gradient subsequently used for ATP formation. It consists of a core antenna complex that captures photons, and an electron transfer chain that converts photonic excitation into a charge separation. This subunit is found at the monomer-monomer interface and is required for correct PSII assembly and/or dimerization. The protein is Photosystem II reaction center protein L of Ephedra sinica (Chinese ephedra).